Here is a 117-residue protein sequence, read N- to C-terminus: Immunoglobulin heavy variable 1-24 (117 aa).

Residues 1-19 (MDCTWRILFLVAAATGTHA) form the signal peptide. Residues 20–44 (QVQLVQSGAEVKKPGASVKVSCKVS) are framework-1. Positions 20–117 (QVQLVQSGAE…EDTAVYYCAT (98 aa)) constitute an Ig-like domain. An intrachain disulfide couples C41 to C115. Residues 45–52 (GYTLTELS) are complementarity-determining-1. A framework-2 region spans residues 53–69 (MHWVRQAPGKGLEWMGG). The complementarity-determining-2 stretch occupies residues 70–77 (FDPEDGET). The tract at residues 78–115 (IYAQKFQGRVTMTEDTSTDTAYMELSSLRSEDTAVYYC) is framework-3. Residues 116–117 (AT) are complementarity-determining-3.

Immunoglobulins are composed of two identical heavy chains and two identical light chains; disulfide-linked.

The protein localises to the secreted. The protein resides in the cell membrane. V region of the variable domain of immunoglobulin heavy chains that participates in the antigen recognition. Immunoglobulins, also known as antibodies, are membrane-bound or secreted glycoproteins produced by B lymphocytes. In the recognition phase of humoral immunity, the membrane-bound immunoglobulins serve as receptors which, upon binding of a specific antigen, trigger the clonal expansion and differentiation of B lymphocytes into immunoglobulins-secreting plasma cells. Secreted immunoglobulins mediate the effector phase of humoral immunity, which results in the elimination of bound antigens. The antigen binding site is formed by the variable domain of one heavy chain, together with that of its associated light chain. Thus, each immunoglobulin has two antigen binding sites with remarkable affinity for a particular antigen. The variable domains are assembled by a process called V-(D)-J rearrangement and can then be subjected to somatic hypermutations which, after exposure to antigen and selection, allow affinity maturation for a particular antigen. This Homo sapiens (Human) protein is Immunoglobulin heavy variable 1-24.